Reading from the N-terminus, the 148-residue chain is Ribonuclease 4 (148 aa).

The N-terminal stretch at 1–29 is a signal peptide; sequence MMDLQRTQSLLLLLVLTLLGLGLVQPSYG. Gln30 bears the Pyrrolidone carboxylic acid mark. Residues Arg36, His41, Lys69, Asn72, and Thr73 each contribute to the dUMP site. The Proton acceptor role is filled by His41. 4 disulfide bridges follow: Cys54-Cys110, Cys68-Cys121, Cys86-Cys136, and Cys93-Cys100. His145 serves as the catalytic Proton donor. Residue Phe146 participates in dUMP binding.

The protein belongs to the pancreatic ribonuclease family. Expressed in the cortical tubules of the kidney (at protein level). Also expressed in the medullary tubules of the kidney.

Its subcellular location is the secreted. Functionally, cleaves preferentially after uridine bases. Has antimicrobial activity against uropathogenic E.coli (UPEC). Probably contributes to urinary tract sterility. The sequence is that of Ribonuclease 4 (Rnase4) from Mus musculus (Mouse).